A 273-amino-acid chain; its full sequence is Gamma-glutamyl cyclotransferase gliK (273 aa).

Residues 227–243 (WLGWIILTLYGLMWSYH) form a helical membrane-spanning segment.

This sequence belongs to the class-I pyridoxal-phosphate-dependent aminotransferase family.

The protein resides in the membrane. The enzyme catalyses an alpha-(gamma-L-glutamyl)-L-amino acid = 5-oxo-L-proline + an L-alpha-amino acid. The protein operates within mycotoxin biosynthesis. Functionally, gamma-glutamyl cyclotransferase-like protein; part of the gene cluster that mediates the biosynthesis of gliotoxin, a member of the epipolythiodioxopiperazine (ETP) class of toxins characterized by a disulfide bridged cyclic dipeptide. The first step in gliotoxin biosynthesis is the condensation of serine and phenylalanine to form the cyclo-L-phenylalanyl-L-serine diketopiperazine (DKP) by the NRPS gliP. GliP is also able to produce the DKP cyclo-L-tryptophanyl-L-serine, suggesting that the substrate specificity of the first adenylation (A) domain in gliP is sufficiently relaxed to accommodate both L-Phe and L-Trp. The cytochrome P450 monooxygenase gliC has been shown to catalyze the subsequent hydroxylation of the alpha-carbon of L-Phe in cyclo-L-phenylalanyl-L-serine whereas the second cytochrome P450 enzyme, gliF, is presumably involved in the modification of the DKP side chain. The glutathione S-transferase (GST) gliG then forms a bis-glutathionylated biosynthetic intermediate which is responsible for the sulfurization of gliotoxin. This bis-glutathionylated intermediate is subsequently processed by the gamma-glutamyl cyclotransferase gliK to remove both gamma-glutamyl moieties. Subsequent processing via gliI yields a biosynthetic intermediate, which is N-methylated via the N-methyltransferase gliN, before the gliotoxin oxidoreductase gliT-mediated disulfide bridge closure. GliN-mediated amide methylation confers stability to ETP, damping the spontaneous formation of tri- and tetrasulfides. Intracellular dithiol gliotoxin oxidized by gliT is subsequently effluxed by gliA. Gliotoxin contributes to pathogenesis during invasive aspergillosis. In macrophages and neutrophils, gliotoxin showed inhibition of various different cell functions including cytokine production, antigen presentation, phagocytosis, and production of reactive oxygen species. The sequence is that of Gamma-glutamyl cyclotransferase gliK from Aspergillus fumigatus (strain ATCC MYA-4609 / CBS 101355 / FGSC A1100 / Af293) (Neosartorya fumigata).